The following is a 285-amino-acid chain: Ret finger protein-like 4A (285 aa).

Residues 11–53 form an RING-type; degenerate zinc finger; sequence CYFCFRYLENPVYLNCGYICCFQCLDSLEKSPEGDGVLCPNCS. Residues 78–276 form the B30.2/SPRY domain; the sequence is EPQLNFILTM…ISICPVMNPS (199 aa).

As to quaternary structure, interacts with PSMB1, UBE2A and CCNB1.

The protein resides in the cytoplasm. The protein localises to the nucleus. This Rattus norvegicus (Rat) protein is Ret finger protein-like 4A (Rfpl4a).